The following is a 481-amino-acid chain: Fibrinogen beta chain (481 aa).

An N-terminal signal peptide occupies residues 1 to 19 (MRHLWLLLLLCVFSVQTQA). Residues 22–81 (DDYDEPTDSLDARGHRPVDRRKEEPPSLRPAPPPISGGGYRARPAKATANQKKVERRPPD) form a disordered region. Over residues 31-47 (LDARGHRPVDRRKEEPP) the composition is skewed to basic and acidic residues. The beta-chain polymerization, binding distal domain of another fibrin stretch occupies residues 35–37 (GHR). Residues 149 to 213 (QAQVKENENV…SDISAQMEYC (65 aa)) are a coiled coil. 2 disulfide bridges follow: C221–C306 and C231–C260. Residues 222 to 478 (NIPVVSGKEC…RMSMKIRPFF (257 aa)) form the Fibrinogen C-terminal domain. N-linked (GlcNAc...) asparagine glycosylation is present at N384. C414 and C427 are joined by a disulfide.

As to quaternary structure, heterohexamer; disulfide linked. Contains 2 sets of 3 non-identical chains (alpha, beta and gamma). The 2 heterotrimers are in head to head conformation with the N-termini in a small central domain. Post-translationally, conversion of fibrinogen to fibrin is triggered by thrombin, which cleaves fibrinopeptides A and B from alpha and beta chains, and thus exposes the N-terminal polymerization sites responsible for the formation of the soft clot.

It localises to the secreted. Cleaved by the protease thrombin to yield monomers which, together with fibrinogen alpha (FGA) and fibrinogen gamma (FGG), polymerize to form an insoluble fibrin matrix. Fibrin has a major function in hemostasis as one of the primary components of blood clots. In addition, functions during the early stages of wound repair to stabilize the lesion and guide cell migration during re-epithelialization. Was originally thought to be essential for platelet aggregation, based on in vitro studies using anticoagulated blood. However, subsequent studies have shown that it is not absolutely required for thrombus formation in vivo. Enhances expression of SELP in activated platelets via an ITGB3-dependent pathway. Maternal fibrinogen is essential for successful pregnancy. Fibrin deposition is also associated with infection, where it protects against IFNG-mediated hemorrhage. May also facilitate the immune response via both innate and T-cell mediated pathways. The chain is Fibrinogen beta chain (Fgb) from Mus musculus (Mouse).